Consider the following 852-residue polypeptide: Protein Shroom1 (852 aa).

Methionine 1 bears the N-acetylmethionine mark. A Phosphoserine modification is found at serine 18. 3 disordered regions span residues serine 34–leucine 54, threonine 81–arginine 109, and alanine 125–glutamine 218. Threonine 103 is subject to Phosphothreonine. Over residues alanine 125–arginine 144 the composition is skewed to low complexity. Serine 133 and serine 137 each carry phosphoserine. The ASD1 domain occupies leucine 145–glycine 233. Over residues valine 152–arginine 164 the composition is skewed to basic and acidic residues. A phosphoserine mark is found at serine 166, serine 190, and serine 224. Disordered regions lie at residues leucine 276–glycine 320, methionine 399–glycine 431, serine 464–glutamate 496, and aspartate 823–threonine 852. Positions threonine 279–serine 289 are enriched in polar residues. The segment covering alanine 301–glycine 313 has biased composition (low complexity). Residues arginine 465 to isoleucine 479 show a composition bias toward polar residues. Positions glutamate 543–glycine 825 constitute an ASD2 domain. Residues serine 830–threonine 852 are compositionally biased toward pro residues.

It belongs to the shroom family. As to quaternary structure, interacts with F-actin.

Its subcellular location is the cytoplasm. It localises to the cytoskeleton. Functionally, may be involved in the assembly of microtubule arrays during cell elongation. This Homo sapiens (Human) protein is Protein Shroom1 (SHROOM1).